Consider the following 356-residue polypeptide: Anthranilate phosphoribosyltransferase (356 aa).

5-phospho-alpha-D-ribose 1-diphosphate is bound by residues Gly-96, 99-100, Thr-104, 106-109, 124-132, and Ser-136; these read GD, NIST, and KHGNRSASG. Gly-96 provides a ligand contact to anthranilate. Ser-108 serves as a coordination point for Mg(2+). An anthranilate-binding site is contributed by Asn-127. Arg-182 lines the anthranilate pocket. Positions 241 and 242 each coordinate Mg(2+).

The protein belongs to the anthranilate phosphoribosyltransferase family. As to quaternary structure, homodimer. Requires Mg(2+) as cofactor.

It catalyses the reaction N-(5-phospho-beta-D-ribosyl)anthranilate + diphosphate = 5-phospho-alpha-D-ribose 1-diphosphate + anthranilate. The protein operates within amino-acid biosynthesis; L-tryptophan biosynthesis; L-tryptophan from chorismate: step 2/5. Functionally, catalyzes the transfer of the phosphoribosyl group of 5-phosphorylribose-1-pyrophosphate (PRPP) to anthranilate to yield N-(5'-phosphoribosyl)-anthranilate (PRA). The chain is Anthranilate phosphoribosyltransferase from Trichodesmium erythraeum (strain IMS101).